Here is a 1242-residue protein sequence, read N- to C-terminus: DNA excision repair protein ERCC-6-like (1242 aa).

Ser14 carries the post-translational modification Phosphoserine. Residues 21 to 54 (YLRYVKEAKEATKNGDLEQALKLFNLAKDIFPNE) form a TPR 1 repeat. Residues 109–277 (SLYRDGRRGG…WSLFDFACQG (169 aa)) enclose the Helicase ATP-binding domain. 122–129 (DDMGLGKT) serves as a coordination point for ATP. Residues 228 to 231 (DEAH) carry the DEAH box motif. Positions 466 to 626 (FLMDLLKKLR…PFRYFSKQEL (161 aa)) constitute a Helicase C-terminal domain. Phosphoserine is present on residues Ser755 and Ser773. A Phosphothreonine modification is found at Thr815. 4 positions are modified to phosphoserine: Ser963, Ser989, Ser998, and Ser1021. At Thr1055 the chain carries Phosphothreonine. A phosphoserine mark is found at Ser1061, Ser1090, and Ser1110. Residues 1103 to 1181 (EERLDNSSEA…LSDGQLVDSP (79 aa)) are disordered. 2 stretches are compositionally biased toward basic and acidic residues: residues 1105–1121 (RLDN…HLEE) and 1130–1140 (APEHTKEDPSR). The segment covering 1141 to 1156 (ETLSSENKSSQLSTSK) has biased composition (polar residues). Phosphoserine is present on residues Ser1173 and Ser1180. The stretch at 1192 to 1225 (YDTLVLHGKELKECGKIQEALDCLVKALDIKSSD) is one TPR 2 repeat.

The protein belongs to the SNF2/RAD54 helicase family. Interacts with PLK1, which phosphorylates it. Both proteins are mutually dependent on each other for correct subcellular localization. Interacts (via N-terminal TPR repeat) with BEND3 (via BEN domains 1 and 3); the interaction is direct. Phosphorylation by PLK1 prevents the association with chromosome arms and restricts its localization to the kinetochore-centromere region.

Its subcellular location is the chromosome. The protein resides in the centromere. It is found in the kinetochore. It catalyses the reaction ATP + H2O = ADP + phosphate + H(+). In terms of biological role, DNA helicase that acts as a tension sensor that associates with catenated DNA which is stretched under tension until it is resolved during anaphase. Functions as ATP-dependent DNA translocase. Can promote Holliday junction branch migration (in vitro). This is DNA excision repair protein ERCC-6-like (ERCC6L) from Bos taurus (Bovine).